A 443-amino-acid polypeptide reads, in one-letter code: Differentially expressed in FDCP 8 homolog A (443 aa).

The disordered stretch occupies residues 1 to 49 (MEYDDKLVRFRQGHLNPFDKQGGAERHPADSEAQPPKDSSTISPHSIPE). Phorbol-ester/DAG-type zinc fingers lie at residues 134-185 (EHRF…TKPC) and 364-424 (IHTT…STSC).

This sequence belongs to the DEF8 family.

In terms of biological role, positively regulates lysosome peripheral distribution and ruffled border formation in osteoclasts. Involved in bone resorption. The polypeptide is Differentially expressed in FDCP 8 homolog A (def8-a) (Xenopus laevis (African clawed frog)).